The following is a 130-amino-acid chain: Small ribosomal subunit protein uS8 (130 aa).

It belongs to the universal ribosomal protein uS8 family. As to quaternary structure, part of the 30S ribosomal subunit.

One of the primary rRNA binding proteins, it binds directly to 16S rRNA central domain where it helps coordinate assembly of the platform of the 30S subunit. In Korarchaeum cryptofilum (strain OPF8), this protein is Small ribosomal subunit protein uS8.